The chain runs to 316 residues: Protein lifeguard 2 (316 aa).

The interval 1–53 (MTQGKLSVANKAPGTEGQQQVHGEKKEAPAVPSAPPSYEEATSGEGMKAGAFP) is disordered. 3 helical membrane-spanning segments follow: residues 106–126 (VYTI…LFTF), 138–158 (PGWY…LACC), and 165–185 (FPWN…LTGM). N-linked (GlcNAc...) asparagine glycosylation is present at Asn191. A run of 4 helical transmembrane segments spans residues 194 to 214 (SVLL…VFSF), 225 to 245 (GVLF…AILL), 250 to 270 (VPWL…LFLA), and 290 to 310 (IFGA…FLQL).

This sequence belongs to the BI1 family. LFG subfamily. As to quaternary structure, interacts with FAS/TNFRSF6 and BAX.

It localises to the cell membrane. It is found in the membrane raft. Its subcellular location is the postsynaptic cell membrane. Antiapoptotic protein which protects cells uniquely from Fas-induced apoptosis. Regulates Fas-mediated apoptosis in neurons by interfering with caspase-8 activation. Plays a role in cerebellar development by affecting cerebellar size, internal granular layer (IGL) thickness, and Purkinje cell (PC) development. In Pongo abelii (Sumatran orangutan), this protein is Protein lifeguard 2 (FAIM2).